Here is a 142-residue protein sequence, read N- to C-terminus: Putative pre-16S rRNA nuclease (142 aa).

It belongs to the YqgF nuclease family.

It is found in the cytoplasm. Functionally, could be a nuclease involved in processing of the 5'-end of pre-16S rRNA. In Mesoplasma florum (strain ATCC 33453 / NBRC 100688 / NCTC 11704 / L1) (Acholeplasma florum), this protein is Putative pre-16S rRNA nuclease.